The sequence spans 433 residues: Transcription factor elt-2 (433 aa).

Disordered stretches follow at residues 1-47 (MDNN…ELPR) and 194-235 (GQPP…RQGL). Residues 27 to 43 (PTQNMDPPEQNNESQLS) are compositionally biased toward polar residues. The segment covering 211-234 (AKQSSKKSSSSNRGSNGSASRRQG) has biased composition (low complexity). A GATA-type zinc finger spans residues 237–261 (CSNCNGTNTTLWRRNAEGDPVCNAC). Residues 275 to 332 (SMKKEGALQTRKRKSKSGDSSTPSTSRARERKFERASSSTEKAQRSSNRRAGSAKADR) form a disordered region. A compositionally biased stretch (polar residues) spans 310–324 (ASSSTEKAQRSSNRR).

Interacts with lag-1. Interacts with pha-4. Interacts with rpt-6. May be ubiquitinated in response to infection by B.pseudomallei. In terms of tissue distribution, expressed in the intestine.

The protein resides in the nucleus. Functionally, transcriptional activator that binds to the consensus sequence 5'-[AT]GATA[AG]-3'. Predominantly directs the transcription of intestinal genes such as ges-1, cpr-6, pho-1, ftn-1, vit-2 and lev-11, and itself. Required for gut-specific differentiation, specifically acting with the GATA region-binding transcription factor elt-7 to control normal gene expression and promote normal formation of the intestine. Regulates intestinal gene expression in response to hypoxia to promote longevity. Modulation of longevity may, in part, be the result of regulation of expression of daf-16 isoforms d and f in the intestine. Regulates tissue specific gene expression at basal levels and in response to bacterial infection in the intestine to control innate immunity. Plays a role in the induction of metal-responsive genes, activating gene expression from zinc-activated promoters and iron-dependent promoters and enhancers. May regulate the expression of genes that control sensitivity to oxidative stress, in a mab-3-dependent manner, and osmotic stress, in conjunction with the GATA region-binding transcription factor elt-3. May play a role in sphingolipid signaling by regulating the expression of the sphingosine-1-phosphate degrading enzyme, sphingosine-1-phosphate lyase. May act with the Notch signaling pathway to promote endodermal gene expression. Has a protective role in response to infection by Gram-negative bacteria such as S.enterica, E.coli, P.aeruginosa and B.pseudomallei, Gram-positive bacterium E.faecalis and fungal pathogen C.neoformans. An association with the 26S proteasome regulatory subunit rpt-6, in part, controls gene expression in response to infection by P.aeruginosa. Regulates gene expression during the recovery phase following a bacterial infection. May act with p38-activated transcription factors to control p38 gene induction in response to bacterial infection. Controls lysosome formation in the intestine by controlling lysosomal gene expression. This chain is Transcription factor elt-2, found in Caenorhabditis elegans.